The following is a 620-amino-acid chain: MYND-type zinc finger protein MUB1 (620 aa).

An MYND-type; degenerate zinc finger spans residues 514–555 (NFSCGKWEDFPRQFAKCRRCKRTKYCSRKCQLKAWGYHRYWC). The Zn(2+) site is built by C530, C533, H551, and C555. Residues 563–606 (MRSTNTTTGVNTPNEPSSLNATATTAADVSNSTSTFTPNISTTV) show a composition bias toward polar residues. The disordered stretch occupies residues 563–620 (MRSTNTTTGVNTPNEPSSLNATATTAADVSNSTSTFTPNISTTVPDEISNRDENSIPE). Residues 610–620 (ISNRDENSIPE) show a composition bias toward basic and acidic residues.

Belongs to the MUB1/samB family. As to quaternary structure, interacts with UBR2 and RPN4.

It localises to the cytoplasm. Its function is as follows. Involved in the determination of the onset of polarized growth. Required for the ubiquitin-dependent degradation of RPN4. Cooperates with UBR2 to transfer ubiquitin from RAD6 to RPN4. The protein is MYND-type zinc finger protein MUB1 (MUB1) of Saccharomyces cerevisiae (strain ATCC 204508 / S288c) (Baker's yeast).